A 268-amino-acid chain; its full sequence is CCAAT/enhancer-binding protein delta (268 aa).

Disordered stretches follow at residues Met-1 to Thr-48, Gly-97 to Gly-132, and Ala-152 to Met-219. Residue Ser-2 is modified to N-acetylserine. Residue Lys-120 forms a Glycyl lysine isopeptide (Lys-Gly) (interchain with G-Cter in SUMO) linkage. The segment covering Pro-155–Ser-167 has biased composition (pro residues). Positions Val-177–Asn-201 are enriched in basic and acidic residues. In terms of domain architecture, bZIP spans Ser-191–Leu-254. A basic motif region spans residues Arg-195–Lys-222. Positions Leu-226–Leu-254 are leucine-zipper.

Belongs to the bZIP family. C/EBP subfamily. As to quaternary structure, binds DNA as a homodimer and as a heterodimer. Can form stable heterodimers with CEBPA, CEBPB and CEBPE. Directly interacts with SPI1/PU.1; this interaction does not affect DNA-binding properties of each partner. Interacts with PRDM16.

The protein localises to the nucleus. Transcription activator that recognizes two different DNA motifs: the CCAAT homology common to many promoters and the enhanced core homology common to many enhancers. Important transcription factor regulating the expression of genes involved in immune and inflammatory responses. Transcriptional activator that enhances IL6 transcription alone and as heterodimer with CEBPB. The protein is CCAAT/enhancer-binding protein delta (Cebpd) of Mus musculus (Mouse).